Here is a 371-residue protein sequence, read N- to C-terminus: MNRGHRHGASSGCLGTMEVKSKFGAEFRRFSLERSKPGKFEEFYGLLQHVHKIPNVDVLVGYADIHGDLLPINNDDNYHKAVSTANPLLRIFIQKKEEADYSAFGTDTLIRKKNMLSNVLRPDNHRKKPHIVISMPQDFRPVSSIIDVDILPETHRRVRLYKYGTEKPLGFYIRDGSSVRVTPHGLEKVPGIFISRLVPGGLAQSTGLLAVNDEVLEVNGIEVSGKSLDQVTDMMIANSRNLIITVRPANQRNNVVRNSRTSGSSSQSTDNSLLGFPQQVEASFEPEDQDSDEDDIIIEDSGEPQQIPKATPAQSLESLTQIELSFESGQNGFSPPQDTSLVPVPGSLDTELESRAPDQKLLEEDGTIITL.

A phosphoserine mark is found at Ser10 and Ser11. One can recognise a PB1 domain in the interval 16 to 96; sequence TMEVKSKFGA…PLLRIFIQKK (81 aa). Residues 126–253 are interaction with PARD3 and CDC42; that stretch reads RKKPHIVISM…ITVRPANQRN (128 aa). The Pseudo-CRIB domain maps to 133–150; that stretch reads ISMPQDFRPVSSIIDVDI. Residues 157-250 form the PDZ domain; sequence RVRLYKYGTE…NLIITVRPAN (94 aa). Disordered stretches follow at residues 253–273 and 326–371; these read NNVV…DNSL and FESG…IITL. Positions 326-340 are enriched in polar residues; it reads FESGQNGFSPPQDTS. A compositionally biased stretch (basic and acidic residues) spans 352–363; it reads LESRAPDQKLLE.

This sequence belongs to the PAR6 family. Interacts with PARD3. Interacts with GTP-bound forms of CDC42, RHOQ/TC10 and RAC1. Interacts with the N-terminal part of PRKCI and PRKCZ. Part of a complex with PARD3, CDC42 or RAC1 and PRKCI or PRKCZ. Part of a complex with LLGL1 and PRKCI. Interacts with ALS2CR19. Interacts with ECT2. Interacts with PALS1. As to expression, expressed in pancreas and in both adult and fetal kidney. Weakly expressed in placenta and lung. Not expressed in other tissues.

Its subcellular location is the cytoplasm. The protein resides in the cell membrane. The protein localises to the cell junction. It localises to the tight junction. In terms of biological role, adapter protein involved in asymmetrical cell division and cell polarization processes. Probably involved in formation of epithelial tight junctions. Association with PARD3 may prevent the interaction of PARD3 with F11R/JAM1, thereby preventing tight junction assembly. The PARD6-PARD3 complex links GTP-bound Rho small GTPases to atypical protein kinase C proteins. The polypeptide is Partitioning defective 6 homolog beta (Pard6b) (Mus musculus (Mouse)).